The sequence spans 447 residues: N-succinylarginine dihydrolase (447 aa).

Residues 19-28 (AGLSFGNEAS), Asn-110, and 137-138 (HR) each bind substrate. Residue Glu-174 is part of the active site. Arg-212 serves as a coordination point for substrate. His-248 is a catalytic residue. Substrate contacts are provided by Asp-250 and Asn-359. Cys-365 acts as the Nucleophile in catalysis.

This sequence belongs to the succinylarginine dihydrolase family. As to quaternary structure, homodimer.

The enzyme catalyses N(2)-succinyl-L-arginine + 2 H2O + 2 H(+) = N(2)-succinyl-L-ornithine + 2 NH4(+) + CO2. It participates in amino-acid degradation; L-arginine degradation via AST pathway; L-glutamate and succinate from L-arginine: step 2/5. Catalyzes the hydrolysis of N(2)-succinylarginine into N(2)-succinylornithine, ammonia and CO(2). The sequence is that of N-succinylarginine dihydrolase from Escherichia coli O1:K1 / APEC.